A 337-amino-acid chain; its full sequence is G-protein coupled receptor 26 (337 aa).

Topologically, residues 1–10 (MNSWDAGLAG) are extracellular. Residues 11 to 31 (LLVGTIGVSLLSNGLVLLCLL) traverse the membrane as a helical segment. Residues 32-47 (HSADIRRQAPALFTLN) lie on the Cytoplasmic side of the membrane. The helical transmembrane segment at 48 to 68 (LTCGNLLCTVVNMPLTLAGVV) threads the bilayer. Topologically, residues 69 to 81 (AQRQPAGDRLCRL) are extracellular. Cys-79 and Cys-156 are joined by a disulfide. Residues 82-102 (AAFLDTFLAANSMLSMAALSI) traverse the membrane as a helical segment. At 103–123 (DRWVAVVFPLSYRAKMRLRDA) the chain is on the cytoplasmic side. Residues 124 to 144 (AFMVAYTWLHALTFPATALAL) traverse the membrane as a helical segment. Residues 145–168 (SWLGFHQLYASCTLCSRRPDERLR) are Extracellular-facing. The chain crosses the membrane as a helical span at residues 169 to 189 (FAVFTSAFHALSFLLSFIVLC). At 190–245 (FTYLKVLKVARFHCKRIDVITMQTLVLLVDIHPSVRERCLEEQKRRRQRATKKIST) the chain is on the cytoplasmic side. Residues 246-266 (FIGTFLVCFAPYVITRLVELF) form a helical membrane-spanning segment. At 267 to 276 (STAPIGSHWG) the chain is on the extracellular side. A helical transmembrane segment spans residues 277–297 (VLSKCLAYSKAASDPFVYSLL). Residues 298 to 337 (RHQYRRSCKELLNRIFNRRSLHSVGLTGDSHSQNILPVSE) are Cytoplasmic-facing.

The protein belongs to the G-protein coupled receptor 1 family. In terms of tissue distribution, exclusively expressed in the brain. Prominent expression is detected throughout the entire neocortex at all rostrocaudal and dorsoventral levels. Strong expression is detected in olfactory and auditory sensory areas.

Its subcellular location is the cell membrane. Its function is as follows. Orphan receptor. Displays a significant level of constitutive activity. Its effect is mediated by G(s)-alpha protein that stimulate adenylate cyclase, resulting in an elevation of intracellular cAMP. This is G-protein coupled receptor 26 (Gpr26) from Mus musculus (Mouse).